The primary structure comprises 398 residues: DJ-1 protein homolog E (398 aa).

PfpI endopeptidase domains lie at 7–199 (KSAL…ESLG) and 210–393 (ASVL…TALG).

It belongs to the peptidase C56 family. Homotrimer. As to expression, expressed in roots and cauline leaves.

Functionally, may be involved in oxidative stress response. The protein is DJ-1 protein homolog E (DJ1E) of Arabidopsis thaliana (Mouse-ear cress).